The sequence spans 70 residues: Large ribosomal subunit protein eL38 (70 aa).

This sequence belongs to the eukaryotic ribosomal protein eL38 family.

The protein is Large ribosomal subunit protein eL38 (RpL38) of Anopheles gambiae (African malaria mosquito).